A 471-amino-acid polypeptide reads, in one-letter code: Eremophilane O-acetyltransferase ORF8 (471 aa).

This sequence belongs to the fumigaclavine B O-acetyltransferase family. Monomer.

It participates in sesquiterpene biosynthesis. Functionally, O-acetyltransferase; part of the gene cluster that mediates the biosynthesis of PR-toxin, a bicyclic sesquiterpene belonging to the eremophilane class and acting as a mycotoxin. The first step of the pathway is catalyzed by the aristolochene synthase which performs the cyclization of trans,trans-farnesyl diphosphate (FPP) to the bicyclic sesquiterpene aristolochene. Following the formation of aristolochene, the non-oxygenated aristolochene is converted to the trioxygenated intermediate eremofortin B, via 7-epi-neopetasone. This conversion appears to involve three enzymes, a hydroxysterol oxidase-like enzyme, the quinone-oxidase prx3 that forms the quinone-type-structure in the bicyclic nucleus of aristolochene with the C8-oxo group and the C-3 hydroxyl group, and the P450 monooxygenase ORF6 that introduces the epoxide at the double bond between carbons 1 and 2. No monoxy or dioxy-intermediates have been reported to be released to the broth, so these three early oxidative reactions may be coupled together. Eremofortin B is further oxidized by another P450 monooxygenase, that introduces a second epoxide between carbons 7 and 11 prior to acetylation to eremofortin A by the acetyltransferase ORF8. The second epoxidation may be performed by a second P450 monooxygenase. After the acetylation step, eremofortin A is converted to eremofortin C and then to PR-toxin. First the conversion of eremofortin A to eremofortin C proceeds by oxidation of the side chain of the molecule at C-12 and is catalyzed by the short-chain oxidoreductase prx1. The cytochrome P450 monooxygenase ORF6 is probably also involved in this step. The primary alcohol formed at C-12 is finally oxidized by the short-chain alcohol dehydrogenase prx4 that forms PR-toxin. The chain is Eremophilane O-acetyltransferase ORF8 from Penicillium roqueforti (strain FM164).